The sequence spans 424 residues: MSNANPFFSQSLAERDASVRGAILKELERQQSQVELIASENIVSRAVLDAQGSVLTNKYAEGYPGKRYYGGCEFADEVEALAIERVKRLFNAGHANVQPHSGAQANGAVMLALAKPGDTVLGMSLDAGGHLTHGAKPALSGKWFNALQYGVSRDTMLIDYDQVEALAQQHKPSLIIAGFSAYPRKLDFARFRAIADSVGAKLMVDMAHIAGVIAAGRHANPVEHAHVVTSTTHKTLRGPRGGFVLTNDEEIAKKINSAVFPGLQGGPLMHVIAGKAVAFGEALTDDFKTYIDRVLANAQALGDVLKAGGVDLVTGGTDNHLLLVDLRPKGLKGAQVEQALERAGITCNKNGIPFDPEKPTITSGIRLGTPAGTTRGFGAAEFREVGRLILEVFEALRTNPEGDHATEQRVRREIFALCERFPIY.

(6S)-5,6,7,8-tetrahydrofolate-binding positions include Leu-125 and 129-131; that span reads GHL. At Lys-234 the chain carries N6-(pyridoxal phosphate)lysine. Glu-250 is a (6S)-5,6,7,8-tetrahydrofolate binding site.

It belongs to the SHMT family. Homodimer. Requires pyridoxal 5'-phosphate as cofactor.

It is found in the cytoplasm. It catalyses the reaction (6R)-5,10-methylene-5,6,7,8-tetrahydrofolate + glycine + H2O = (6S)-5,6,7,8-tetrahydrofolate + L-serine. The protein operates within one-carbon metabolism; tetrahydrofolate interconversion. Its pathway is amino-acid biosynthesis; glycine biosynthesis; glycine from L-serine: step 1/1. Catalyzes the reversible interconversion of serine and glycine with tetrahydrofolate (THF) serving as the one-carbon carrier. This reaction serves as the major source of one-carbon groups required for the biosynthesis of purines, thymidylate, methionine, and other important biomolecules. Also exhibits THF-independent aldolase activity toward beta-hydroxyamino acids, producing glycine and aldehydes, via a retro-aldol mechanism. This Burkholderia pseudomallei (strain 1710b) protein is Serine hydroxymethyltransferase 2.